Here is a 138-residue protein sequence, read N- to C-terminus: Acidic phospholipase A2 AplTX-I (138 aa).

Residues 1–16 (MRTLWIMAVLLLGVEG) form the signal peptide. 7 disulfides stabilise this stretch: Cys-42-Cys-131, Cys-44-Cys-60, Cys-59-Cys-111, Cys-65-Cys-138, Cys-66-Cys-104, Cys-73-Cys-97, and Cys-91-Cys-102. Positions 43, 45, and 47 each coordinate Ca(2+). His-63 is a catalytic residue. Asp-64 contributes to the Ca(2+) binding site. Asp-105 is an active-site residue.

In terms of assembly, monomer. Ca(2+) is required as a cofactor. As to expression, expressed by the venom gland.

It localises to the secreted. It catalyses the reaction a 1,2-diacyl-sn-glycero-3-phosphocholine + H2O = a 1-acyl-sn-glycero-3-phosphocholine + a fatty acid + H(+). With respect to regulation, inhibited by divalent cations different from calcium ions (cadmium, magnesium, manganese, zinc), since they act as competitive antagonists of this cofactor. Functionally, snake venom phospholipase A2 (PLA2) that triggers a high neuromuscular toxicity in chick biventer cervicis preparations, but not in mouse phrenic nerve-diaphragm (PND) preparations, suggesting a selective neurotoxin activity towards birds. Does not induce myotoxic, coagulant, anticoagulant, edema, and antibacterial activities. PLA2 catalyzes the calcium-dependent hydrolysis of the 2-acyl groups in 3-sn-phosphoglycerides. This chain is Acidic phospholipase A2 AplTX-I, found in Agkistrodon piscivorus leucostoma (Western cottonmouth).